Here is a 513-residue protein sequence, read N- to C-terminus: Ribonuclease Y (513 aa).

A helical transmembrane segment spans residues threonine 4–phenylalanine 24. The disordered stretch occupies residues lysine 78 to glutamate 106. Residues threonine 203–valine 288 form the KH domain. The 94-residue stretch at valine 329–alanine 422 folds into the HD domain.

It belongs to the RNase Y family.

It is found in the cell membrane. Functionally, endoribonuclease that initiates mRNA decay. The chain is Ribonuclease Y from Finegoldia magna (strain ATCC 29328 / DSM 20472 / WAL 2508) (Peptostreptococcus magnus).